The following is a 1311-amino-acid chain: Sterol regulatory element-binding protein cleavage-activating protein (1311 aa).

At 1-18 (MPLIDKLRERISRAFYSH) the chain is on the cytoplasmic side. Residues 19-39 (GLLCASYPIPIIILTALCILA) form a helical membrane-spanning segment. The Lumenal segment spans residues 40-277 (SCYPLLKLPL…HIVHVHFKEE (238 aa)). The loop-1 stretch occupies residues 46–282 (KLPLPGTGPV…HFKEEIGIAE (237 aa)). N-linked (GlcNAc...) asparagine glycosylation is found at Asn242 and Asn261. A helical membrane pass occupies residues 278–298 (IGIAELIPLVTTYIILFAYIY). The region spanning 282–440 (ELIPLVTTYI…MFFFTTVLSI (159 aa)) is the SSD domain. At 299–310 (FSTRKIDLVKSK) the chain is on the cytoplasmic side. Residues 311–331 (WGLALAAVVTVLSSLLMSVGL) traverse the membrane as a helical segment. Over 332 to 342 (CTLFGLTPTLN) the chain is Lumenal. Residues 343-363 (GGEIFPYLVVVIGLENVLVLT) form a helical membrane-spanning segment. At 364–399 (KSVVSTPVDLEVKLRIAQGLRNESWFIMKNMATELG) the chain is on the cytoplasmic side. The chain crosses the membrane as a helical span at residues 400 to 420 (IILIGYFTLVPAIQEFCLFAV). Position 421 (Val421) is a topological domain, lumenal. A helical transmembrane segment spans residues 422–442 (GLVSDFFLQMFFFTTVLSIDI). At 443-512 (RRMELADLNK…FFARTRLAQR (70 aa)) the chain is on the cytoplasmic side. The ER export signal motif lies at 445–450 (MELADL). A helical transmembrane segment spans residues 513–533 (IIMAGTVVWIGILVYTDPAGL). Residues 529–726 (DPAGLRNYLT…QTPADVTLYK (198 aa)) form a loop-7 region. Residues 534–723 (RNYLTVHVTE…TENQTPADVT (190 aa)) lie on the Lumenal side of the membrane. Asn583 and Asn651 each carry an N-linked (GlcNAc...) asparagine glycan. A helical transmembrane segment spans residues 724–744 (LYKVAALGLASGIFLVLFFFL). Residues 745 to 1311 (LYRLLCPKNY…YVPSVLEKLD (567 aa)) are Cytoplasmic-facing. The interval 747–1311 (RLLCPKNYGQ…YVPSVLEKLD (565 aa)) is interaction with srebf. 7 WD repeats span residues 790–827 (GHHMDIECLASDKMLLVSCCLAGQIRVWDAQSGDCLTI), 997–1034 (SFESSVWSLGLQGNLIVVGRSNGNLEVWDAIEGSLRCS), 1037–1076 (DGQSGITSLVFLNHRVVVARLNGSMDFYCLDSQKSSNQLQ), 1109–1146 (AHRKPITALKAAAGRLVTGSQDHTVRIYRLEDACCLFT), 1149–1187 (GHSGGITAIYIDETMVLASGGQDGAICLWDVLTGSRVSH), 1190–1227 (GHRGDVTSLLCTASCVISSGLDDVISIWDRSTAIKLYS), and 1230–1267 (QDLGCGSSLGLISDNLLVTGGLGCVSFWDVGYGDLLQT).

The protein belongs to the WD repeat SCAP family. As to quaternary structure, membrane region forms a homotetramer. Component of the SCAP-SREBP complex (composed of SCAP and srebf1/srebp1 or srebf2/srebp2). Forms a ternary complex with insig1 or insig2 through its transmembrane domains at high sterol concentrations. Interacts with the SEC23-SEC24 complex.

The protein resides in the endoplasmic reticulum membrane. It localises to the golgi apparatus membrane. Its subcellular location is the cytoplasmic vesicle. The protein localises to the COPII-coated vesicle membrane. Its function is as follows. Escort protein required for cholesterol as well as lipid homeostasis. Regulates export of the SCAP-SREBP complex from the endoplasmic reticulum to the Golgi upon low cholesterol, thereby regulating the processing of sterol regulatory element-binding proteins (SREBPs) SREBF1/SREBP1 and SREBF2/SREBP2. At high sterol concentrations, formation of a ternary complex with INSIG (INSIG1 or INSIG2) leads to mask the ER export signal in SCAP, promoting retention of the complex in the endoplasmic reticulum. Low sterol concentrations trigger release of INSIG, a conformational change in the SSD domain of SCAP, unmasking of the ER export signal, promoting recruitment into COPII-coated vesicles and transport of the SCAP-SREBP to the Golgi: in the Golgi, SREBPs are then processed, releasing the transcription factor fragment of SREBPs from the membrane, its import into the nucleus and up-regulation of LDLR, INSIG1 and the mevalonate pathway. Binds cholesterol via its SSD domain. This Xenopus laevis (African clawed frog) protein is Sterol regulatory element-binding protein cleavage-activating protein.